Reading from the N-terminus, the 198-residue chain is uncharacterized protein (198 aa).

An N-terminal signal peptide occupies residues 1-28 (MHPTQRKLMKRIILFLSLLFCIACPAIA).

The protein belongs to the fimbrial protein family.

The protein resides in the fimbrium. Functionally, part of the yadCKLM-htrE-yadVN fimbrial operon. Could contribute to adhesion to various surfaces in specific environmental niches. This is an uncharacterized protein from Escherichia coli (strain K12).